Reading from the N-terminus, the 287-residue chain is Nucleotide-binding protein Hhal_2130 (287 aa).

11 to 18 (GLSGSGKS) provides a ligand contact to ATP. 63–66 (DARN) is a binding site for GTP.

The protein belongs to the RapZ-like family.

Its function is as follows. Displays ATPase and GTPase activities. The protein is Nucleotide-binding protein Hhal_2130 of Halorhodospira halophila (strain DSM 244 / SL1) (Ectothiorhodospira halophila (strain DSM 244 / SL1)).